The sequence spans 97 residues: Nucleoid-associated protein HPAG1_0033 (97 aa).

This sequence belongs to the YbaB/EbfC family. Homodimer.

It is found in the cytoplasm. The protein localises to the nucleoid. Binds to DNA and alters its conformation. May be involved in regulation of gene expression, nucleoid organization and DNA protection. The protein is Nucleoid-associated protein HPAG1_0033 of Helicobacter pylori (strain HPAG1).